A 381-amino-acid polypeptide reads, in one-letter code: Transaldolase 2 (381 aa).

K141 serves as the catalytic Schiff-base intermediate with substrate.

Belongs to the transaldolase family. Type 2 subfamily.

The protein resides in the cytoplasm. The enzyme catalyses D-sedoheptulose 7-phosphate + D-glyceraldehyde 3-phosphate = D-erythrose 4-phosphate + beta-D-fructose 6-phosphate. Its pathway is carbohydrate degradation; pentose phosphate pathway; D-glyceraldehyde 3-phosphate and beta-D-fructose 6-phosphate from D-ribose 5-phosphate and D-xylulose 5-phosphate (non-oxidative stage): step 2/3. Transaldolase is important for the balance of metabolites in the pentose-phosphate pathway. The protein is Transaldolase 2 (tal2) of Nostoc punctiforme (strain ATCC 29133 / PCC 73102).